We begin with the raw amino-acid sequence, 480 residues long: Bifunctional protein GlmU (480 aa).

The interval Met-1 to Pro-247 is pyrophosphorylase. Residues Lys-24, Gln-86, Gly-91–Thr-92, Ser-113–Asp-115, Gly-150, Glu-172, and Asn-245 each bind UDP-N-acetyl-alpha-D-glucosamine. Asp-115 lines the Mg(2+) pocket. A Mg(2+)-binding site is contributed by Asn-245. The segment at Val-248 to Gln-268 is linker. Residues Gly-269–Gly-480 form an N-acetyltransferase region. The UDP-N-acetyl-alpha-D-glucosamine site is built by Arg-355 and Lys-373. The active-site Proton acceptor is His-385. UDP-N-acetyl-alpha-D-glucosamine-binding residues include Tyr-388 and Asn-399. Acetyl-CoA contacts are provided by residues Ala-402, Asn-408 to Tyr-409, Ser-427, Gly-445, and Arg-462.

It in the N-terminal section; belongs to the N-acetylglucosamine-1-phosphate uridyltransferase family. The protein in the C-terminal section; belongs to the transferase hexapeptide repeat family. As to quaternary structure, homotrimer. Mg(2+) is required as a cofactor.

It localises to the cytoplasm. It carries out the reaction alpha-D-glucosamine 1-phosphate + acetyl-CoA = N-acetyl-alpha-D-glucosamine 1-phosphate + CoA + H(+). The enzyme catalyses N-acetyl-alpha-D-glucosamine 1-phosphate + UTP + H(+) = UDP-N-acetyl-alpha-D-glucosamine + diphosphate. It participates in nucleotide-sugar biosynthesis; UDP-N-acetyl-alpha-D-glucosamine biosynthesis; N-acetyl-alpha-D-glucosamine 1-phosphate from alpha-D-glucosamine 6-phosphate (route II): step 2/2. Its pathway is nucleotide-sugar biosynthesis; UDP-N-acetyl-alpha-D-glucosamine biosynthesis; UDP-N-acetyl-alpha-D-glucosamine from N-acetyl-alpha-D-glucosamine 1-phosphate: step 1/1. The protein operates within bacterial outer membrane biogenesis; LPS lipid A biosynthesis. Its function is as follows. Catalyzes the last two sequential reactions in the de novo biosynthetic pathway for UDP-N-acetylglucosamine (UDP-GlcNAc). The C-terminal domain catalyzes the transfer of acetyl group from acetyl coenzyme A to glucosamine-1-phosphate (GlcN-1-P) to produce N-acetylglucosamine-1-phosphate (GlcNAc-1-P), which is converted into UDP-GlcNAc by the transfer of uridine 5-monophosphate (from uridine 5-triphosphate), a reaction catalyzed by the N-terminal domain. The sequence is that of Bifunctional protein GlmU from Polaromonas sp. (strain JS666 / ATCC BAA-500).